The sequence spans 1562 residues: Cell surface antigen I/II (1562 aa).

Residues 1 to 38 (MKVKKTYGFRKSKISKTLCGAVLGTVAAVSVAGQKVFA) form the signal peptide. Low complexity predominate over residues 42-54 (TTTSDVDTKVVGT). Positions 42–91 (TTTSDVDTKVVGTQTGNPATNLPEAQGSASKEAEQSQNQAGETNGSIPVE) are disordered. A helical region spans residues 60-551 (ATNLPEAQGS…SKAKYDQKIL (492 aa)). Positions 76 to 87 (QSQNQAGETNGS) are enriched in polar residues. Ag I/II A repeat units follow at residues 147–221 (KKTT…QKTN), 222–303 (AANQ…QEAN), 304–385 (AANE…KKAN), and 386–467 (AANE…QKDL). 2 disordered regions span residues 824–973 (VPKV…PTDP) and 1482–1509 (SNTV…RTST). A compositionally biased stretch (pro residues) spans 943–958 (PTPPTPTPDQPEPNKP). Over residues 1500–1509 (QDPSSPRTST) the composition is skewed to low complexity. Positions 1529 to 1533 (LPNTG) match the LPXTG sorting signal motif. Thr1532 carries the pentaglycyl murein peptidoglycan amidated threonine modification. Positions 1533 to 1562 (GVTNNAYMPLLGIIGLVTSFSLLGLKAKKD) are cleaved as a propeptide — removed by sortase.

Belongs to the antigen I/II family. Detected as a 185 kDa cell surface protein, but also as 2 proteins in S.mutans culture supernatants of about 150 kDa (antigen I) and 50 kDa (antigen II); antigen II is only seen after proteolysis. Antigen I and II have the same N-terminus but different C-termini.

The protein resides in the secreted. It localises to the cell wall. Surface protein antigen implicated in dental caries. The polypeptide is Cell surface antigen I/II (Streptococcus mutans serotype c (strain ATCC 700610 / UA159)).